The sequence spans 146 residues: Putative ankyrin repeat protein FPV224 (146 aa).

ANK repeat units lie at residues 9–38 (SLSTPLHHAINLLKTDIVSLLMQYKADASI), 42–79 (KGITPFCYAMYLGYYGVNKDILNIITRYNSINGTTRDI), 94–126 (YVFVNLHDAARLGYVYILKKIIYNGKNINRIDE), and 127–145 (YYYSALHYAVKSSNLKAVN).

This chain is Putative ankyrin repeat protein FPV224, found in Fowlpox virus (strain NVSL) (FPV).